The following is a 135-amino-acid chain: Large ribosomal subunit protein bL12c (135 aa).

This sequence belongs to the bacterial ribosomal protein bL12 family. In terms of assembly, homodimer. Part of the ribosomal stalk of the 50S ribosomal subunit. Forms a multimeric L10(L12)X complex, where L10 forms an elongated spine to which 2 to 4 L12 dimers bind in a sequential fashion. Binds GTP-bound translation factors.

It is found in the plastid. Its subcellular location is the chloroplast. Forms part of the ribosomal stalk which helps the ribosome interact with GTP-bound translation factors. Is thus essential for accurate translation. The polypeptide is Large ribosomal subunit protein bL12c (Chara vulgaris (Common stonewort)).